The sequence spans 436 residues: Trigger factor (436 aa).

Disordered stretches follow at residues 1–26 and 81–100; these read MQVS…RVEN and QESL…TGEG. Residues 161-246 enclose the PPIase FKBP-type domain; that stretch reads EDRVVIDFHG…VKRVEEPQLP (86 aa).

The protein belongs to the FKBP-type PPIase family. Tig subfamily.

Its subcellular location is the cytoplasm. The enzyme catalyses [protein]-peptidylproline (omega=180) = [protein]-peptidylproline (omega=0). Its function is as follows. Involved in protein export. Acts as a chaperone by maintaining the newly synthesized protein in an open conformation. Functions as a peptidyl-prolyl cis-trans isomerase. This chain is Trigger factor, found in Halorhodospira halophila (strain DSM 244 / SL1) (Ectothiorhodospira halophila (strain DSM 244 / SL1)).